Consider the following 471-residue polypeptide: Ribulose bisphosphate carboxylase large chain (471 aa).

Substrate contacts are provided by N115 and T165. Residue K167 is the Proton acceptor of the active site. K169 is a binding site for substrate. Mg(2+)-binding residues include K193, D195, and E196. The residue at position 193 (K193) is an N6-carboxylysine. H286 functions as the Proton acceptor in the catalytic mechanism. Substrate-binding residues include R287, H319, and S371.

It belongs to the RuBisCO large chain family. Type I subfamily. Heterohexadecamer of 8 large chains and 8 small chains. Mg(2+) is required as a cofactor.

It localises to the carboxysome. The catalysed reaction is 2 (2R)-3-phosphoglycerate + 2 H(+) = D-ribulose 1,5-bisphosphate + CO2 + H2O. It catalyses the reaction D-ribulose 1,5-bisphosphate + O2 = 2-phosphoglycolate + (2R)-3-phosphoglycerate + 2 H(+). Its function is as follows. RuBisCO catalyzes two reactions: the carboxylation of D-ribulose 1,5-bisphosphate, the primary event in carbon dioxide fixation, as well as the oxidative fragmentation of the pentose substrate in the photorespiration process. Both reactions occur simultaneously and in competition at the same active site. The sequence is that of Ribulose bisphosphate carboxylase large chain from Prochlorococcus marinus (strain MIT 9515).